We begin with the raw amino-acid sequence, 100 residues long: MVSEKVLAIIAVALGTYLARFLPLKIKFATSDKIKSFLSLSSTSVISALFVTSVFTPDAAEFGVRVAALFPLILSFYRWRNFGLSIFAAVLSYYLLRLAV.

It to M.jannaschii MJ1155.1.

This is an uncharacterized protein from Archaeoglobus fulgidus (strain ATCC 49558 / DSM 4304 / JCM 9628 / NBRC 100126 / VC-16).